Here is a 156-residue protein sequence, read N- to C-terminus: ATP synthase subunit b (156 aa).

The helical transmembrane segment at 12–32 (VAFFIFVIFCMKFVWPPVIAA) threads the bilayer.

It belongs to the ATPase B chain family. F-type ATPases have 2 components, F(1) - the catalytic core - and F(0) - the membrane proton channel. F(1) has five subunits: alpha(3), beta(3), gamma(1), delta(1), epsilon(1). F(0) has three main subunits: a(1), b(2) and c(10-14). The alpha and beta chains form an alternating ring which encloses part of the gamma chain. F(1) is attached to F(0) by a central stalk formed by the gamma and epsilon chains, while a peripheral stalk is formed by the delta and b chains.

The protein resides in the cell inner membrane. Functionally, f(1)F(0) ATP synthase produces ATP from ADP in the presence of a proton or sodium gradient. F-type ATPases consist of two structural domains, F(1) containing the extramembraneous catalytic core and F(0) containing the membrane proton channel, linked together by a central stalk and a peripheral stalk. During catalysis, ATP synthesis in the catalytic domain of F(1) is coupled via a rotary mechanism of the central stalk subunits to proton translocation. Its function is as follows. Component of the F(0) channel, it forms part of the peripheral stalk, linking F(1) to F(0). This Pseudomonas savastanoi pv. phaseolicola (strain 1448A / Race 6) (Pseudomonas syringae pv. phaseolicola (strain 1448A / Race 6)) protein is ATP synthase subunit b.